We begin with the raw amino-acid sequence, 210 residues long: MSSAQNIKKSILAPVLDNNPIALQVLGVCSALAVTTKLETAFVMTLAVTFVTALSNFFVSVIRNHIPNSVRIIVQMAIIASLVIVVDQILKAYLYDISKQLSVFVGLIITNCIVMGRAEAFAMKSAPVPSLIDGIGNGLGYGFVLITVGFFRELFGSGKLFGMEVLPLVNNGGWYQPNGLMLLAPSAFFLIGFMIWAIRTFKPEQVEAKE.

Transmembrane regions (helical) follow at residues 42 to 62 (FVMT…VSVI), 72 to 92 (IIVQ…ILKA), 103 to 123 (VFVG…AFAM), 131 to 151 (LIDG…VGFF), and 178 to 198 (NGLM…IWAI).

This sequence belongs to the NqrDE/RnfAE family. In terms of assembly, composed of six subunits; NqrA, NqrB, NqrC, NqrD, NqrE and NqrF.

The protein resides in the cell inner membrane. The enzyme catalyses a ubiquinone + n Na(+)(in) + NADH + H(+) = a ubiquinol + n Na(+)(out) + NAD(+). In terms of biological role, NQR complex catalyzes the reduction of ubiquinone-1 to ubiquinol by two successive reactions, coupled with the transport of Na(+) ions from the cytoplasm to the periplasm. NqrA to NqrE are probably involved in the second step, the conversion of ubisemiquinone to ubiquinol. The polypeptide is Na(+)-translocating NADH-quinone reductase subunit D (Vibrio vulnificus (strain YJ016)).